The chain runs to 310 residues: Small ribosomal subunit protein uS2 (310 aa).

2 disordered regions span residues 213–240 and 271–310; these read EEQAALARQQEEANAGTTAGFSEWGGAA and WDSVAPGATDDWGAEPAAPSSDWGTAVTMQEQAKPSTDWA. Low complexity predominate over residues 216 to 227; it reads AALARQQEEANA. The segment covering 297-310 has biased composition (polar residues); it reads VTMQEQAKPSTDWA.

It belongs to the universal ribosomal protein uS2 family. As to quaternary structure, component of the small ribosomal subunit. Mature ribosomes consist of a small (40S) and a large (60S) subunit. The 40S subunit contains about 33 different proteins and 1 molecule of RNA (18S). The 60S subunit contains about 49 different proteins and 3 molecules of RNA (28S, 5.8S and 5S). Interacts with ribosomal protein S21.

It localises to the cytoplasm. Required for the assembly and/or stability of the 40S ribosomal subunit. Required for the processing of the 20S rRNA-precursor to mature 18S rRNA in a late step of the maturation of 40S ribosomal subunits. This is Small ribosomal subunit protein uS2 from Nematostella vectensis (Starlet sea anemone).